The following is a 766-amino-acid chain: 5-methyltetrahydropteroyltriglutamate--homocysteine methyltransferase (766 aa).

Residues 16–19 and Lys-119 each bind 5-methyltetrahydropteroyltri-L-glutamate; that span reads RELK. L-homocysteine contacts are provided by residues 440 to 442 and Glu-493; that span reads IGS. Residues 440–442 and Glu-493 each bind L-methionine; that span reads IGS. 5-methyltetrahydropteroyltri-L-glutamate is bound by residues 524–525 and Trp-570; that span reads RC. Asp-608 lines the L-homocysteine pocket. Residue Asp-608 coordinates L-methionine. Glu-614 contacts 5-methyltetrahydropteroyltri-L-glutamate. 3 residues coordinate Zn(2+): His-650, Cys-652, and Glu-674. His-703 (proton donor) is an active-site residue. Cys-735 provides a ligand contact to Zn(2+).

Belongs to the vitamin-B12 independent methionine synthase family. The cofactor is Zn(2+).

The enzyme catalyses 5-methyltetrahydropteroyltri-L-glutamate + L-homocysteine = tetrahydropteroyltri-L-glutamate + L-methionine. It participates in amino-acid biosynthesis; L-methionine biosynthesis via de novo pathway; L-methionine from L-homocysteine (MetE route): step 1/1. Its function is as follows. Catalyzes the transfer of a methyl group from 5-methyltetrahydrofolate to homocysteine resulting in methionine formation. The chain is 5-methyltetrahydropteroyltriglutamate--homocysteine methyltransferase from Pseudomonas aeruginosa (strain ATCC 15692 / DSM 22644 / CIP 104116 / JCM 14847 / LMG 12228 / 1C / PRS 101 / PAO1).